A 359-amino-acid polypeptide reads, in one-letter code: MPNKTVLHSKHLESGAKMVDFHGWEMPINYGSQIEEHHAVRRTAGMFDVSHMTIVDVVGEQAQDYLRHLLANDVAKLKERGKALYSGMLNEEGGVVDDLIVYHFETTNYRLVVNSATRQKDMDWLNAQAEGFDVTITERPEFAMIAVQGPQAKEKAATLFSSAQNEAVAGMKPFFGVQAEDLFIATTGYTGEAGYEIMVPNEQAADFWQKLLDAGVAPCGLGARDTLRLEAGMNLYGQDMDETISPLAANMGWTITWEPAERNFVGRKALEAQKAAGTDKLVGLVLTEKGVLRHGQAVQVEGGEGIITSGTFSPTLGHSIAMARVPASVGDTAQVEMRKKWVTVNVVKPSFVRNGKSVL.

This sequence belongs to the GcvT family. The glycine cleavage system is composed of four proteins: P, T, L and H.

It catalyses the reaction N(6)-[(R)-S(8)-aminomethyldihydrolipoyl]-L-lysyl-[protein] + (6S)-5,6,7,8-tetrahydrofolate = N(6)-[(R)-dihydrolipoyl]-L-lysyl-[protein] + (6R)-5,10-methylene-5,6,7,8-tetrahydrofolate + NH4(+). Functionally, the glycine cleavage system catalyzes the degradation of glycine. The chain is Aminomethyltransferase from Pseudoalteromonas atlantica (strain T6c / ATCC BAA-1087).